The sequence spans 316 residues: Ribose-phosphate pyrophosphokinase (316 aa).

ATP-binding positions include 41 to 43 and 100 to 101; these read DGE and RQ. Mg(2+) contacts are provided by His-134 and Asp-174. Residue Lys-197 is part of the active site. D-ribose 5-phosphate contacts are provided by residues Arg-199, Asp-223, and 227–231; that span reads DTAGT.

This sequence belongs to the ribose-phosphate pyrophosphokinase family. Class I subfamily. In terms of assembly, homohexamer. Mg(2+) serves as cofactor.

The protein localises to the cytoplasm. It carries out the reaction D-ribose 5-phosphate + ATP = 5-phospho-alpha-D-ribose 1-diphosphate + AMP + H(+). Its pathway is metabolic intermediate biosynthesis; 5-phospho-alpha-D-ribose 1-diphosphate biosynthesis; 5-phospho-alpha-D-ribose 1-diphosphate from D-ribose 5-phosphate (route I): step 1/1. Involved in the biosynthesis of the central metabolite phospho-alpha-D-ribosyl-1-pyrophosphate (PRPP) via the transfer of pyrophosphoryl group from ATP to 1-hydroxyl of ribose-5-phosphate (Rib-5-P). The protein is Ribose-phosphate pyrophosphokinase of Caldanaerobacter subterraneus subsp. tengcongensis (strain DSM 15242 / JCM 11007 / NBRC 100824 / MB4) (Thermoanaerobacter tengcongensis).